We begin with the raw amino-acid sequence, 518 residues long: MIPDVSQALAWLEKHPQALKGIQRGLERETLRVNADGTLATTGHPEALGSALTHKWITTDFAEALLEFITPVDGDIEHMLTFMRDLHRYTARNMCDERMWPLSMPCYIAEGQDIELAQYGTSNTGRFKTLYREGLKNRYGALMQTISGVHYNFSLPMAFWQAKCGDISGADAKEKISAGYFRVIRNYYRFGWVIPYLFGASPAICSSFLQGKPTSLPFEKTECGMYYLPYATSLRLSDLGYTNKSQSNLGITFNDLYEYVAGLKQAIKTPSEEYAKIGIEKDGKRLQINSNVLQIENELYAPIRPKRVTRSGESPSDALLRGGIEYIEVRSLDINPFSPIGVDEQQVRFLDLFMVWCALADAPEMSSSELACTRVNWNRVILEGRKPGLTLGIGCETAQFPLPQVGKDLFRDLKRVAQTLDSINGGEAYQKVCDELVACFDNPDLTFSARILRSMIDTGIGGTGKAFAEAYRNLLREEPLEILREEDFVAEREASERRQQEMEAADTEPFAVWLEKHA.

The protein belongs to the glutamate--cysteine ligase type 1 family. Type 1 subfamily.

It carries out the reaction L-cysteine + L-glutamate + ATP = gamma-L-glutamyl-L-cysteine + ADP + phosphate + H(+). The protein operates within sulfur metabolism; glutathione biosynthesis; glutathione from L-cysteine and L-glutamate: step 1/2. This is Glutamate--cysteine ligase from Escherichia coli O8 (strain IAI1).